Here is a 242-residue protein sequence, read N- to C-terminus: Probable ergothioneine transport ATP-binding protein EgtUA (242 aa).

Residues 2-236 enclose the ABC transporter domain; it reads IEYKNVALRY…PATDFVADLF (235 aa). Residue 34 to 41 participates in ATP binding; sequence GPSGSGKT.

The protein belongs to the ABC transporter superfamily. In terms of assembly, the complex is probably composed of at least an ATP-binding protein (EgtUA) and a transmembrane protein (EgtUBC).

Its subcellular location is the cell inner membrane. It catalyses the reaction ergothioneine(out) + ATP + H2O = ergothioneine(in) + ADP + phosphate + H(+). Its function is as follows. Part of an ABC transporter complex EgtU required for the uptake of ergothioneine (EGT), a natural low-molecular weight (LMW) thiol antioxidant. Probably responsible for energy coupling to the transport system. The polypeptide is Probable ergothioneine transport ATP-binding protein EgtUA (Streptococcus pneumoniae serotype 2 (strain D39 / NCTC 7466)).